The sequence spans 481 residues: Aspartyl/glutamyl-tRNA(Asn/Gln) amidotransferase subunit B (481 aa).

Belongs to the GatB/GatE family. GatB subfamily. Heterotrimer of A, B and C subunits.

The catalysed reaction is L-glutamyl-tRNA(Gln) + L-glutamine + ATP + H2O = L-glutaminyl-tRNA(Gln) + L-glutamate + ADP + phosphate + H(+). It catalyses the reaction L-aspartyl-tRNA(Asn) + L-glutamine + ATP + H2O = L-asparaginyl-tRNA(Asn) + L-glutamate + ADP + phosphate + 2 H(+). Functionally, allows the formation of correctly charged Asn-tRNA(Asn) or Gln-tRNA(Gln) through the transamidation of misacylated Asp-tRNA(Asn) or Glu-tRNA(Gln) in organisms which lack either or both of asparaginyl-tRNA or glutaminyl-tRNA synthetases. The reaction takes place in the presence of glutamine and ATP through an activated phospho-Asp-tRNA(Asn) or phospho-Glu-tRNA(Gln). The polypeptide is Aspartyl/glutamyl-tRNA(Asn/Gln) amidotransferase subunit B (Ehrlichia chaffeensis (strain ATCC CRL-10679 / Arkansas)).